The primary structure comprises 96 residues: Putative pterin-4-alpha-carbinolamine dehydratase (96 aa).

Belongs to the pterin-4-alpha-carbinolamine dehydratase family.

The catalysed reaction is (4aS,6R)-4a-hydroxy-L-erythro-5,6,7,8-tetrahydrobiopterin = (6R)-L-erythro-6,7-dihydrobiopterin + H2O. The chain is Putative pterin-4-alpha-carbinolamine dehydratase from Herpetosiphon aurantiacus (strain ATCC 23779 / DSM 785 / 114-95).